The primary structure comprises 150 residues: D-aminoacyl-tRNA deacylase (150 aa).

The Gly-cisPro motif, important for rejection of L-amino acids signature appears at Gly-138–Pro-139.

It belongs to the DTD family. Homodimer.

Its subcellular location is the cytoplasm. It carries out the reaction glycyl-tRNA(Ala) + H2O = tRNA(Ala) + glycine + H(+). The catalysed reaction is a D-aminoacyl-tRNA + H2O = a tRNA + a D-alpha-amino acid + H(+). In terms of biological role, an aminoacyl-tRNA editing enzyme that deacylates mischarged D-aminoacyl-tRNAs. Also deacylates mischarged glycyl-tRNA(Ala), protecting cells against glycine mischarging by AlaRS. Acts via tRNA-based rather than protein-based catalysis; rejects L-amino acids rather than detecting D-amino acids in the active site. By recycling D-aminoacyl-tRNA to D-amino acids and free tRNA molecules, this enzyme counteracts the toxicity associated with the formation of D-aminoacyl-tRNA entities in vivo and helps enforce protein L-homochirality. This Sorangium cellulosum (strain So ce56) (Polyangium cellulosum (strain So ce56)) protein is D-aminoacyl-tRNA deacylase.